The primary structure comprises 385 residues: Pre-mRNA-splicing factor slt-11 (385 aa).

The disordered stretch occupies residues 157-233 (RKGREVDEEG…PPGPKDWLPP (77 aa)). Residues 171–187 (GSSSGAGRATGGNPAVG) show a composition bias toward low complexity. The region spanning 239–312 (MSLFVTGIED…CPLRVRWSVP (74 aa)) is the RRM domain. Residues 320–331 (KEQRSEMLRDGR) are compositionally biased toward basic and acidic residues. The tract at residues 320–370 (KEQRSEMLRDGRSAFGSGQKTGGQKAIGGQNAQGGASGAQKDDASNLTIAA) is disordered.

Belongs to the SLT11 family. As to quaternary structure, associated with the spliceosome.

The protein resides in the nucleus. Functionally, involved in pre-mRNA splicing. Facilitates the cooperative formation of U2/U6 helix II in association with stem II in the spliceosome. Binds to RNA. This Neurospora crassa (strain ATCC 24698 / 74-OR23-1A / CBS 708.71 / DSM 1257 / FGSC 987) protein is Pre-mRNA-splicing factor slt-11 (slt-11).